The sequence spans 447 residues: Phosphoglucosamine mutase (447 aa).

The Phosphoserine intermediate role is filled by S100. Mg(2+) is bound by residues S100, D239, D241, and D243. Phosphoserine is present on S100.

This sequence belongs to the phosphohexose mutase family. Mg(2+) is required as a cofactor. Post-translationally, activated by phosphorylation.

The enzyme catalyses alpha-D-glucosamine 1-phosphate = D-glucosamine 6-phosphate. Its function is as follows. Catalyzes the conversion of glucosamine-6-phosphate to glucosamine-1-phosphate. The chain is Phosphoglucosamine mutase from Thermoanaerobacter sp. (strain X514).